The chain runs to 64 residues: Large ribosomal subunit protein uL29 (64 aa).

It belongs to the universal ribosomal protein uL29 family.

The protein is Large ribosomal subunit protein uL29 (rpl29) of Methanothermobacter thermautotrophicus (strain ATCC 29096 / DSM 1053 / JCM 10044 / NBRC 100330 / Delta H) (Methanobacterium thermoautotrophicum).